We begin with the raw amino-acid sequence, 154 residues long: 3-hydroxyacyl-[acyl-carrier-protein] dehydratase FabZ (154 aa).

H57 is an active-site residue.

It belongs to the thioester dehydratase family. FabZ subfamily.

Its subcellular location is the cytoplasm. It carries out the reaction a (3R)-hydroxyacyl-[ACP] = a (2E)-enoyl-[ACP] + H2O. In terms of biological role, involved in unsaturated fatty acids biosynthesis. Catalyzes the dehydration of short chain beta-hydroxyacyl-ACPs and long chain saturated and unsaturated beta-hydroxyacyl-ACPs. This chain is 3-hydroxyacyl-[acyl-carrier-protein] dehydratase FabZ, found in Sinorhizobium fredii (strain NBRC 101917 / NGR234).